The chain runs to 798 residues: Neuroligin-1 (798 aa).

Positions 1–17 (MERIYLLLLLFLPRIRS) are cleaved as a signal peptide. Topologically, residues 18 to 685 (YDVRSVTTSW…AAGSFTGKAL (668 aa)) are extracellular. C86 and C125 are disulfide-bonded. N-linked (GlcNAc...) asparagine glycans are attached at residues N164, N292, and N315. A disulfide bridge links C288 with C307. A disordered region spans residues 636–676 (ANLPFPPPPMPPSPPPELTTKPKPSESPTTLQTTTESEKAA). Over residues 639 to 652 (PFPPPPMPPSPPPE) the composition is skewed to pro residues. The span at 653–665 (LTTKPKPSESPTT) shows a compositional bias: low complexity. Residues 686 to 706 (GGVIFIGCGFLIMNVCLLIAV) traverse the membrane as a helical segment. The Cytoplasmic segment spans residues 707 to 798 (RREWGKKRRN…QAPTLEEIQV (92 aa)). Positions 731–765 (HGGGAEQYNSLNSPEPLLSASHKNSTSMRPAGISP) are disordered.

The protein belongs to the type-B carboxylesterase/lipase family. Interacts (via extracellular domain) with isoform b of madd-4; the interaction is required for the localization to postsynaptic domains. Interacts with unc-49.

It is found in the cell membrane. It localises to the synapse. Probable neuronal cell surface protein thought to be involved in cell-cell-interactions by forming intercellular junctions through binding to beta-neurexins. Plays a role in the clustering of the GABA(A) receptor unc-49 at postsynaptic sites in neuromuscular junctions (NMJs) via the interaction with madd-4 and neurexin nrx-1 and is thereby required for normal GABAergic synaptic transmission. The sequence is that of Neuroligin-1 (nlg-1) from Caenorhabditis elegans.